The following is a 1300-amino-acid chain: Sal-like protein 3 (1300 aa).

A compositionally biased stretch (basic residues) spans 1–11; the sequence is MSRRKQAKPQH. Disordered stretches follow at residues 1–51, 84–162, 234–258, and 277–352; these read MSRR…EETS, EDAP…YGAP, QRPP…PSQL, and GSGP…GSLL. The C2H2-type 1; atypical zinc finger occupies 51–73; sequence SVCEKCCAEFFKWADFLEHQRSC. The segment covering 87–100 has biased composition (pro residues); sequence PAPPPEDFPEPSPA. Residue S109 is modified to Phosphoserine. Over residues 122-132 the composition is skewed to basic and acidic residues; sequence GEARPVEKEAE. A compositionally biased stretch (pro residues) spans 145 to 157; that stretch reads PRPPPAAPAPPTP. Low complexity-rich tracts occupy residues 277-319 and 329-352; these read GSGP…AAPA and PQSA…GSLL. 2 consecutive C2H2-type zinc fingers follow at residues 420 to 442 and 448 to 470; these read HKCR…LRSH and FKCN…FQRH. Residues 523–633 form a disordered region; the sequence is PTSVGLQLPP…VDGAPTSLGS (111 aa). A compositionally biased stretch (low complexity) spans 543 to 561; it reads SPSATPASRSPQRPSPASS. A compositionally biased stretch (polar residues) spans 577–586; that stretch reads VSATAESPQS. 3 consecutive C2H2-type zinc fingers follow at residues 679 to 701, 707 to 729, and 739 to 761; these read NQCV…YRTH, FKCK…FGVH, and HSCP…IRMH. The tract at residues 864-955 is disordered; sequence SVENGSGESD…GSGGAPGRAG (92 aa). A compositionally biased stretch (low complexity) spans 889-910; that stretch reads RSAGSPALSESSSSQALSPAPS. S919 carries the post-translational modification Phosphoserine. 4 consecutive C2H2-type zinc fingers follow at residues 977–999, 1005–1027, 1113–1135, and 1141–1163; these read TVCG…YRSH, FVCA…LLTH, HNCQ…ERTH, and FGCT…MGTH. S1177 carries the phosphoserine modification. The disordered stretch occupies residues 1259 to 1279; it reads GMDKARTGSSPPIVSLDKASS.

Belongs to the sal C2H2-type zinc-finger protein family. Widely expressed in adult with highest levels in heart. Expressed in fetal brain (in neurons of hippocampus, cortex, mediodorsal and ventrolateral thalamic nuclei, putamen, cerebellum and brainstem).

It localises to the nucleus. Functionally, probable transcription factor. The protein is Sal-like protein 3 (SALL3) of Homo sapiens (Human).